We begin with the raw amino-acid sequence, 241 residues long: Phosphoribosylaminoimidazole-succinocarboxamide synthase (241 aa).

This sequence belongs to the SAICAR synthetase family.

The enzyme catalyses 5-amino-1-(5-phospho-D-ribosyl)imidazole-4-carboxylate + L-aspartate + ATP = (2S)-2-[5-amino-1-(5-phospho-beta-D-ribosyl)imidazole-4-carboxamido]succinate + ADP + phosphate + 2 H(+). Its pathway is purine metabolism; IMP biosynthesis via de novo pathway; 5-amino-1-(5-phospho-D-ribosyl)imidazole-4-carboxamide from 5-amino-1-(5-phospho-D-ribosyl)imidazole-4-carboxylate: step 1/2. This is Phosphoribosylaminoimidazole-succinocarboxamide synthase (purC) from Bacillus subtilis (strain 168).